A 293-amino-acid polypeptide reads, in one-letter code: D-alanine--D-alanine ligase (293 aa).

The ATP-grasp domain maps to 98 to 291 (KIIWKQHNLT…FNKLVVAIIN (194 aa)). 124 to 177 (DFPLPWMVKPTLEGSSIGISKVDSQIQLNNALMLAWQYNSHALIEQWIEGDEYT) provides a ligand contact to ATP. Mg(2+)-binding residues include Asp-245, Glu-258, and Asn-260.

It belongs to the D-alanine--D-alanine ligase family. Requires Mg(2+) as cofactor. The cofactor is Mn(2+).

Its subcellular location is the cytoplasm. The enzyme catalyses 2 D-alanine + ATP = D-alanyl-D-alanine + ADP + phosphate + H(+). It functions in the pathway cell wall biogenesis; peptidoglycan biosynthesis. Its function is as follows. Cell wall formation. The polypeptide is D-alanine--D-alanine ligase (Ruthia magnifica subsp. Calyptogena magnifica).